A 377-amino-acid chain; its full sequence is MLYQFIFHTLLRRVDAERAHRVSFAGLRALAAVPGTTRLMRRVLGPREPELRVRVFGREFPGPLGLAAGFDKNARGVAALTALGFSHVEIGTVTGQPQPGNPRPRLFRLVADRAIVNRMGFNNEGSQAVSERLRAHRARRARDLIVGVNIGKTKVVPDSDAVADYVTSARRFADLADYLVVNVSSPNTPGLRDLQATERLRPLLSAVRRTLDEAGRPDLPLLVKIAPDLADEDIDAVADLAVELGLDGIIATNTTVSRDGLATDPEEVAALGAGGLSGAPLKERALQVLRRLRARVGDRLVLIAVGGIETPEDAWARIRAGATLVQGYTGLIYGGPLWPRRIHRGVAALARRDGFASIAEAVGVDVDPSAKPSTASS.

Residues 68–72 and T92 contribute to the FMN site; that span reads AGFDK. K72 provides a ligand contact to substrate. Residue 117 to 121 coordinates substrate; that stretch reads NRMGF. FMN-binding residues include N149 and N182. N182 contacts substrate. Catalysis depends on S185, which acts as the Nucleophile. Substrate is bound at residue N187. The FMN site is built by K224 and T252. 253–254 serves as a coordination point for substrate; it reads NT. FMN is bound by residues G278, G307, and 328 to 329; that span reads YT.

This sequence belongs to the dihydroorotate dehydrogenase family. Type 2 subfamily. Monomer. FMN is required as a cofactor.

Its subcellular location is the cell membrane. The enzyme catalyses (S)-dihydroorotate + a quinone = orotate + a quinol. It functions in the pathway pyrimidine metabolism; UMP biosynthesis via de novo pathway; orotate from (S)-dihydroorotate (quinone route): step 1/1. Functionally, catalyzes the conversion of dihydroorotate to orotate with quinone as electron acceptor. The chain is Dihydroorotate dehydrogenase (quinone) from Thermobifida fusca (strain YX).